We begin with the raw amino-acid sequence, 245 residues long: Adenosylcobinamide-GDP ribazoletransferase (245 aa).

5 consecutive transmembrane segments (helical) span residues 31-51, 61-81, 113-133, 138-158, and 192-212; these read FGRA…VLYA, PLLQ…ALHL, VAVV…AALL, AGLL…LFLT, and LAFG…FAWL.

Belongs to the CobS family. It depends on Mg(2+) as a cofactor.

It localises to the cell inner membrane. It catalyses the reaction alpha-ribazole + adenosylcob(III)inamide-GDP = adenosylcob(III)alamin + GMP + H(+). The catalysed reaction is alpha-ribazole 5'-phosphate + adenosylcob(III)inamide-GDP = adenosylcob(III)alamin 5'-phosphate + GMP + H(+). It functions in the pathway cofactor biosynthesis; adenosylcobalamin biosynthesis; adenosylcobalamin from cob(II)yrinate a,c-diamide: step 7/7. Functionally, joins adenosylcobinamide-GDP and alpha-ribazole to generate adenosylcobalamin (Ado-cobalamin). Also synthesizes adenosylcobalamin 5'-phosphate from adenosylcobinamide-GDP and alpha-ribazole 5'-phosphate. This is Adenosylcobinamide-GDP ribazoletransferase from Pseudomonas aeruginosa (strain UCBPP-PA14).